A 732-amino-acid polypeptide reads, in one-letter code: Polyribonucleotide nucleotidyltransferase (732 aa).

Residues D516 and D522 each coordinate Mg(2+). One can recognise a KH domain in the interval 582–642; that stretch reads PSSHTITVHP…PKVIAACDYI (61 aa). The region spanning 659-726 is the S1 motif domain; the sequence is GDILKGKIKR…KGHKIELGLR (68 aa).

It belongs to the polyribonucleotide nucleotidyltransferase family. Mg(2+) is required as a cofactor.

It localises to the cytoplasm. The enzyme catalyses RNA(n+1) + phosphate = RNA(n) + a ribonucleoside 5'-diphosphate. Functionally, involved in mRNA degradation. Catalyzes the phosphorolysis of single-stranded polyribonucleotides processively in the 3'- to 5'-direction. The sequence is that of Polyribonucleotide nucleotidyltransferase from Nitratiruptor sp. (strain SB155-2).